Here is a 301-residue protein sequence, read N- to C-terminus: MERLVQRMYCLGMRDPPPANIMAQQEPNGDFPYLPSGAAEVNRMIKENSDLFSDSQCKVCSAVLISESQKLAHYQSKKHASKVRRYMSIHGSEEPIAKRFKPSGDDQSNVDEKDKYKACSVCNMTFSSPVVAQSHYQGKVHSKNLRMQSIGSQTPALPQPEAQAKKDDGMQGPAEQDPNRFCSICQASFNNPLMAQQHYSGKKHKKHMNKQKLMETFGPSTAPASTVKGYPCTVCNIELNSVEQYQAHISGSKHKNHAKPKKGPNAFAPPPDNYQPDYQYPTNEDCLEDPAEWDSFNVAYE.

Matrin-type zinc fingers lie at residues 55–85 (SQCKVCSAVLISESQKLAHYQSKKHASKVRR) and 117–141 (KACSVCNMTFSSPVVAQSHYQGKVH). Cys-57, Cys-60, His-73, His-79, Cys-119, Cys-122, His-135, and His-141 together coordinate Zn(2+). A disordered region spans residues 151 to 177 (GSQTPALPQPEAQAKKDDGMQGPAEQD). Matrin-type zinc fingers lie at residues 180–210 (RFCSICQASFNNPLMAQQHYSGKKHKKHMNK) and 230–257 (YPCTVCNIELNSVEQYQAHISGSKHKNH). Residues 250–283 (SGSKHKNHAKPKKGPNAFAPPPDNYQPDYQYPTN) are disordered. The span at 251–262 (GSKHKNHAKPKK) shows a compositional bias: basic residues.

It is found in the nucleus. The protein resides in the cytoplasm. Binds preferentially to dsRNA, but also to RNA-DNA hybrids. This Danio rerio (Zebrafish) protein is Zinc finger protein 346.